The primary structure comprises 68 residues: Putative membrane protein insertion efficiency factor (68 aa).

This sequence belongs to the UPF0161 family.

The protein resides in the cell inner membrane. Its function is as follows. Could be involved in insertion of integral membrane proteins into the membrane. This chain is Putative membrane protein insertion efficiency factor, found in Aquifex aeolicus (strain VF5).